We begin with the raw amino-acid sequence, 1296 residues long: Nuclear factor related to kappa-B-binding protein (1296 aa).

The region spanning 39 to 156 (PEDLLEDPEI…LKQILASRSD (118 aa)) is the DEUBAD domain. Disordered regions lie at residues 165–186 (GPAL…EREW) and 204–232 (GDTA…PAVP). Residues 216 to 232 (SSWLPSSPARSPSPAVP) show a composition bias toward low complexity. 2 positions are modified to phosphoserine: Ser228 and Ser298. Lys327 participates in a covalent cross-link: Glycyl lysine isopeptide (Lys-Gly) (interchain with G-Cter in SUMO2). Position 351 is a phosphoserine (Ser351). Positions 370–495 (LGINEISSSF…FCKENEDSSD (126 aa)) are winged-helix like domain. Lys469 participates in a covalent cross-link: Glycyl lysine isopeptide (Lys-Gly) (interchain with G-Cter in SUMO2). Residue Lys488 forms a Glycyl lysine isopeptide (Lys-Gly) (interchain with G-Cter in SUMO1); alternate linkage. Lys488 participates in a covalent cross-link: Glycyl lysine isopeptide (Lys-Gly) (interchain with G-Cter in SUMO2); alternate. 2 disordered regions span residues 663-758 (QAQA…SSGV) and 1015-1036 (HAAD…PAGT). The segment covering 700 to 713 (PSEQSQMSLSDSSM) has biased composition (low complexity). Pro residues predominate over residues 726-737 (PALPTPISPPPV). Residues 741-758 (NRSGSSTVSEPAQSSSGV) show a composition bias toward polar residues. Positions 1016 to 1034 (AADSPAKAPSASVPSSAPA) are enriched in low complexity. A Phosphoserine modification is found at Ser1019. Residue Lys1234 is modified to N6-acetyllysine. Ser1288 bears the Phosphoserine mark.

It belongs to the NFRKB family. Component of the chromatin remodeling INO80 complex; specifically part of a complex module associated with the N-terminus of INO80. Interacts with UCHL5.

The protein resides in the nucleus. Its function is as follows. Binds to the DNA consensus sequence 5'-GGGGAATCTCC-3'. In terms of biological role, putative regulatory component of the chromatin remodeling INO80 complex which is involved in transcriptional regulation, DNA replication and probably DNA repair. Modulates the deubiquitinase activity of UCHL5 in the INO80 complex. The polypeptide is Nuclear factor related to kappa-B-binding protein (Nfrkb) (Mus musculus (Mouse)).